The sequence spans 272 residues: MGRVRNRATAQRRRRKRPGDPPAACAAIAVTGASRAQCPRVQVGVGSHAAAKRWLGRWRRKRRWRRVRKAGPRDLLPSAPTPDPPGPAPSPKDLDLGAQRERWETFRKLRGLSCEGAAKVLLDTFEYPGLVHHTGGCHCGAVRFAVWAPADLRVVDCSCRLCRKKQHRHFLVPASRFTLLQGAESIVTYRSNTHPALHSFCSRCGVQSFHAAVSDPRVYGVAPHCLDEGTVRSVVIEEVGGGDPGEEAAEEHKAIHKTSSQSAPACPREQEQ.

The span at 1–17 (MGRVRNRATAQRRRRKR) shows a compositional bias: basic residues. Disordered regions lie at residues 1–23 (MGRVRNRATAQRRRRKRPGDPPA) and 65–95 (RRVRKAGPRDLLPSAPTPDPPGPAPSPKDLD). Pro residues predominate over residues 79–90 (APTPDPPGPAPS). The CENP-V/GFA domain occupies 133–246 (HTGGCHCGAV…EEVGGGDPGE (114 aa)). Zn(2+) contacts are provided by cysteine 137, cysteine 139, cysteine 157, cysteine 159, cysteine 162, cysteine 201, and cysteine 204. Residues 240–272 (GGGDPGEEAAEEHKAIHKTSSQSAPACPREQEQ) are disordered.

It belongs to the Gfa family. Zn(2+) is required as a cofactor.

The protein is Centromere protein V-like protein 1 of Homo sapiens (Human).